Consider the following 179-residue polypeptide: Plasmid-derived single-stranded DNA-binding protein (179 aa).

The region spanning 6–110 (INKVILVGRL…ILVKTTGTMQ (105 aa)) is the SSB domain. Residues 55–61 (WHRVVLF) mediate DNA binding. The disordered stretch occupies residues 117-179 (GAQTQPEEGQ…DYGFSDDIPF (63 aa)). Positions 118-132 (AQTQPEEGQQFSGQP) are enriched in polar residues. A compositionally biased stretch (basic residues) spans 145 to 155 (GGAKTKGRGRK). A compositionally biased stretch (acidic residues) spans 167–179 (EGDDYGFSDDIPF).

Homotetramer.

Its function is as follows. May contribute to the conjugative processing of DNA. It has a functional relationship with Psi (plasmid-mediated sos inhibition) proteins. The chain is Plasmid-derived single-stranded DNA-binding protein (ssbF) from Escherichia coli (strain K12).